The sequence spans 864 residues: Leucine--tRNA ligase (864 aa).

The 'HIGH' region signature appears at Pro-42–His-52. The 'KMSKS' region signature appears at Lys-622–Ser-626. ATP is bound at residue Lys-625.

Belongs to the class-I aminoacyl-tRNA synthetase family.

Its subcellular location is the cytoplasm. It catalyses the reaction tRNA(Leu) + L-leucine + ATP = L-leucyl-tRNA(Leu) + AMP + diphosphate. In Cellvibrio japonicus (strain Ueda107) (Pseudomonas fluorescens subsp. cellulosa), this protein is Leucine--tRNA ligase.